A 547-amino-acid polypeptide reads, in one-letter code: Sodium-coupled neutral amino acid transporter 4 (547 aa).

Residues methionine 1–isoleucine 30 are disordered. Residues methionine 1–glycine 104 are Extracellular-facing. Phosphoserine is present on serine 49. The helical transmembrane segment at isoleucine 105–leucine 125 threads the bilayer. Topologically, residues leucine 126 to lysine 151 are cytoplasmic. Residues isoleucine 152–isoleucine 172 traverse the membrane as a helical segment. The Extracellular segment spans residues isoleucine 173 to tyrosine 195. The helical transmembrane segment at leucine 196 to leucine 216 threads the bilayer. Residues lysine 217–glycine 220 lie on the Cytoplasmic side of the membrane. A helical membrane pass occupies residues tyrosine 221–isoleucine 241. Over tyrosine 242–threonine 332 the chain is Extracellular. A disulfide bond links cysteine 249 and cysteine 321. N-linked (GlcNAc...) asparagine glycans are attached at residues asparagine 260, asparagine 264, and asparagine 276. A helical transmembrane segment spans residues alanine 333–tyrosine 353. At serine 354–asparagine 369 the chain is on the cytoplasmic side. A helical transmembrane segment spans residues isoleucine 370–phenylalanine 390. At tyrosine 391 to proline 411 the chain is on the extracellular side. A helical membrane pass occupies residues leucine 412–phenylalanine 432. At proline 433–histidine 453 the chain is on the cytoplasmic side. Residues phenylalanine 454–isoleucine 474 form a helical membrane-spanning segment. The Extracellular segment spans residues lysine 475–tyrosine 476. A helical transmembrane segment spans residues isoleucine 477–phenylalanine 497. At tyrosine 498–glycine 514 the chain is on the cytoplasmic side. Residues alanine 515–isoleucine 535 form a helical membrane-spanning segment. Residues aspartate 536–histidine 547 lie on the Extracellular side of the membrane.

It belongs to the amino acid/polyamine transporter 2 family. The disulfide bond plays an important role in substrate transport, but has no effect on trafficking to the cell surface. As to expression, expressed almost exclusively in embryonic and adult liver, and at lower levels in the kidney. Expressed at lower levels in adult muscle and pancreas. Detected in fetal blood vessels. Expressed in syncytiotrophoblas of placenta during first trimester and at term. Highly expressed in first trimester placenta compared to term placenta.

It is found in the cell membrane. Its subcellular location is the cell projection. The protein localises to the microvillus membrane. The enzyme catalyses L-methionine(in) + Na(+)(in) = L-methionine(out) + Na(+)(out). It catalyses the reaction L-asparagine(in) + Na(+)(in) = L-asparagine(out) + Na(+)(out). The catalysed reaction is L-threonine(in) + Na(+)(in) = L-threonine(out) + Na(+)(out). It carries out the reaction L-serine(in) + Na(+)(in) = L-serine(out) + Na(+)(out). The enzyme catalyses glycine(in) + Na(+)(in) = glycine(out) + Na(+)(out). It catalyses the reaction L-alanine(in) + Na(+)(in) = L-alanine(out) + Na(+)(out). The catalysed reaction is L-glutamine(in) + Na(+)(in) = L-glutamine(out) + Na(+)(out). It carries out the reaction L-histidine(in) + Na(+)(in) = L-histidine(out) + Na(+)(out). The enzyme catalyses L-cysteine(in) + Na(+)(in) = L-cysteine(out) + Na(+)(out). It catalyses the reaction L-proline(in) + Na(+)(in) = L-proline(out) + Na(+)(out). In terms of biological role, symporter that cotransports neutral amino acids and sodium ions from the extraccellular to the intracellular side of the cell membrane. The transport is electrogenic, pH dependent and partially tolerates substitution of Na(+) by Li(+). Preferentially transports smaller amino acids, such as glycine, L-alanine, L-serine, L-asparagine and L-threonine, followed by L-cysteine, L-histidine, L-proline and L-glutamine and L-methionine. The sequence is that of Sodium-coupled neutral amino acid transporter 4 from Homo sapiens (Human).